Reading from the N-terminus, the 213-residue chain is Cytokinin riboside 5'-monophosphate phosphoribohydrolase LOG2 (213 aa).

Residues glutamate 79, 97–98 (RK), 114–120 (GYGTFEE), and threonine 126 contribute to the substrate site.

It belongs to the LOG family. Expressed in roots and shoots. Detected in root hairs.

It is found in the cytoplasm. It localises to the nucleus. The enzyme catalyses N(6)-(dimethylallyl)adenosine 5'-phosphate + H2O = N(6)-dimethylallyladenine + D-ribose 5-phosphate. It carries out the reaction 9-ribosyl-trans-zeatin 5'-phosphate + H2O = trans-zeatin + D-ribose 5-phosphate. Functionally, cytokinin-activating enzyme working in the direct activation pathway. Phosphoribohydrolase that converts inactive cytokinin nucleotides to the biologically active free-base forms. The protein is Cytokinin riboside 5'-monophosphate phosphoribohydrolase LOG2 (LOG2) of Arabidopsis thaliana (Mouse-ear cress).